The primary structure comprises 804 residues: Leucine--tRNA ligase (804 aa).

Positions 40–51 (PYPSGAGLHVGH) match the 'HIGH' region motif. A 'KMSKS' region motif is present at residues 576–580 (KMSKS). Lys579 contacts ATP.

The protein belongs to the class-I aminoacyl-tRNA synthetase family.

The protein resides in the cytoplasm. The enzyme catalyses tRNA(Leu) + L-leucine + ATP = L-leucyl-tRNA(Leu) + AMP + diphosphate. The chain is Leucine--tRNA ligase from Bacillus licheniformis (strain ATCC 14580 / DSM 13 / JCM 2505 / CCUG 7422 / NBRC 12200 / NCIMB 9375 / NCTC 10341 / NRRL NRS-1264 / Gibson 46).